We begin with the raw amino-acid sequence, 375 residues long: 23S rRNA (uracil(747)-C(5))-methyltransferase RlmC (375 aa).

Residues C3, C11, C14, and C87 each coordinate [4Fe-4S] cluster. 4 residues coordinate S-adenosyl-L-methionine: Q212, F241, E262, and N307. C334 serves as the catalytic Nucleophile.

The protein belongs to the class I-like SAM-binding methyltransferase superfamily. RNA M5U methyltransferase family. RlmC subfamily.

It carries out the reaction uridine(747) in 23S rRNA + S-adenosyl-L-methionine = 5-methyluridine(747) in 23S rRNA + S-adenosyl-L-homocysteine + H(+). Its function is as follows. Catalyzes the formation of 5-methyl-uridine at position 747 (m5U747) in 23S rRNA. This is 23S rRNA (uracil(747)-C(5))-methyltransferase RlmC from Shigella dysenteriae serotype 1 (strain Sd197).